We begin with the raw amino-acid sequence, 364 residues long: Nucleosome assembly protein 1;2 (364 aa).

Residues 32-86 (VESIKNTLQGLAARHTDVLESLEPKVRKRVEVLREIQSQHDDLEAKFFEERAALE) adopt a coiled-coil conformation. Residues 53-68 (LEPKVRKRVEVLREIQ) carry the Nuclear export signal motif. The Nuclear localization signal signature appears at 227-232 (KKKPKK). Disordered regions lie at residues 250-269 (FNFF…DEDT) and 301-364 (GEAA…CKQQ). Composition is skewed to acidic residues over residues 259-269 (PDDDEEIDEDT) and 304-340 (AQDE…DDED). The residue at position 361 (cysteine 361) is a Cysteine methyl ester. Cysteine 361 is lipidated: S-farnesyl cysteine. The propeptide at 362 to 364 (KQQ) is removed in mature form.

It belongs to the nucleosome assembly protein (NAP) family.

It localises to the nucleus. The protein localises to the cytoplasm. Its function is as follows. May modulate chromatin structure by regulation of nucleosome assembly/disassembly. The polypeptide is Nucleosome assembly protein 1;2 (NAP1;2) (Oryza sativa subsp. japonica (Rice)).